Reading from the N-terminus, the 330-residue chain is Phenylalanine--tRNA ligase alpha subunit (330 aa).

Residue Glu255 coordinates Mg(2+).

It belongs to the class-II aminoacyl-tRNA synthetase family. Phe-tRNA synthetase alpha subunit type 1 subfamily. As to quaternary structure, tetramer of two alpha and two beta subunits. The cofactor is Mg(2+).

The protein localises to the cytoplasm. It carries out the reaction tRNA(Phe) + L-phenylalanine + ATP = L-phenylalanyl-tRNA(Phe) + AMP + diphosphate + H(+). The chain is Phenylalanine--tRNA ligase alpha subunit from Acinetobacter baylyi (strain ATCC 33305 / BD413 / ADP1).